A 560-amino-acid polypeptide reads, in one-letter code: Choline/ethanolamine transporter FLVCR1 (560 aa).

Positions methionine 1–glutamate 43 are disordered. Topologically, residues methionine 1–proline 92 are cytoplasmic. Residues arginine 93–glutamine 117 traverse the membrane as a helical segment. Over tryptophan 118–serine 135 the chain is Extracellular. Residues proline 136–threonine 163 traverse the membrane as a helical segment. The Cytoplasmic segment spans residues arginine 164–glycine 165. A helical transmembrane segment spans residues leucine 166–cysteine 185. Residues glycine 186 to leucine 192 are Extracellular-facing. Residues phenylalanine 193–tryptophan 221 form a helical membrane-spanning segment. Glutamine 207 contributes to the ethanolamine binding site. Over phenylalanine 222–glutamate 226 the chain is Cytoplasmic. Residues valine 227–leucine 252 form a helical membrane-spanning segment. At valine 253–asparagine 270 the chain is on the extracellular side. An N-linked (GlcNAc...) asparagine glycan is attached at asparagine 270. The helical transmembrane segment at asparagine 271–alanine 300 threads the bilayer. At phenylalanine 301 to asparagine 336 the chain is on the cytoplasmic side. Residues isoleucine 337 to tyrosine 367 form a helical membrane-spanning segment. The Extracellular segment spans residues tyrosine 368–glutamate 371. A helical transmembrane segment spans residues glutamate 372–threonine 400. Residues lysine 401–threonine 402 lie on the Cytoplasmic side of the membrane. Residues tyrosine 403–leucine 425 form a helical membrane-spanning segment. Residues asparagine 426–glycine 428 are Extracellular-facing. A helical membrane pass occupies residues tyrosine 429–isoleucine 458. Topologically, residues threonine 459–methionine 466 are cytoplasmic. Residues serine 467 to aspartate 492 traverse the membrane as a helical segment. Ethanolamine is bound at residue glutamine 476. Glutamine 476 serves as a coordination point for choline. Residues tyrosine 493 to serine 495 lie on the Extracellular side of the membrane. The chain crosses the membrane as a helical span at residues proline 496 to lysine 518. Residues serine 519 to leucine 560 are Cytoplasmic-facing. The residue at position 542 (serine 542) is a Phosphoserine.

It belongs to the major facilitator superfamily. Feline leukemia virus subgroup C receptor (TC 2.A.1.28.1) family.

It is found in the cell membrane. The protein localises to the mitochondrion membrane. It catalyses the reaction choline(out) = choline(in). The catalysed reaction is ethanolamine(in) = ethanolamine(out). The enzyme catalyses heme b(in) = heme b(out). Its function is as follows. Uniporter that mediates the transport of extracellular choline and ethanolamine into cells, thereby playing a key role in phospholipid biosynthesis. Choline and ethanolamine are the precursors of phosphatidylcholine and phosphatidylethanolamine, respectively, the two most abundant phospholipids. Transport is not coupled with proton transport and is exclusively driven by the choline (or ethanolamine) gradient across the plasma membrane. Also acts as a heme b transporter that mediates heme efflux from the cytoplasm to the extracellular compartment. In terms of biological role, uniporter that mediates the transport of extracellular choline and ethanolamine into cells. Choline and ethanolamine are the precursors of phosphatidylcholine and phosphatidylethanolamine, respectively, the two most abundant phospholipids. Transport is not coupled with proton transport and is exclusively driven by the choline (or ethanolamine) gradient across the plasma membrane. Also acts as a heme b transporter that mediates heme efflux from the cytoplasm to the extracellular compartment. Heme export depends on the presence of HPX and is required to maintain intracellular free heme balance, protecting cells from heme toxicity. Heme export provides protection from heme or ferrous iron toxicities in liver, brain, sensory neurons and during erythropoiesis, a process in which heme synthesis intensifies. Possibly export coproporphyrin and protoporphyrin IX, which are both intermediate products in the heme biosynthetic pathway. Does not export bilirubin. The molecular mechanism of heme transport, whether electrogenic, electroneutral or coupled to other ions, remains to be elucidated. Functionally, heme transporter that promotes heme efflux from the mitochondrion to the cytoplasm. Essential for erythroid differentiation. In Mus musculus (Mouse), this protein is Choline/ethanolamine transporter FLVCR1 (Flvcr1).